A 309-amino-acid polypeptide reads, in one-letter code: tRNA dimethylallyltransferase (309 aa).

Gly9–Thr16 contributes to the ATP binding site. Thr11–Thr16 contributes to the substrate binding site. Residues Asp34–Gln37 form an interaction with substrate tRNA region.

This sequence belongs to the IPP transferase family. As to quaternary structure, monomer. Mg(2+) serves as cofactor.

The catalysed reaction is adenosine(37) in tRNA + dimethylallyl diphosphate = N(6)-dimethylallyladenosine(37) in tRNA + diphosphate. Catalyzes the transfer of a dimethylallyl group onto the adenine at position 37 in tRNAs that read codons beginning with uridine, leading to the formation of N6-(dimethylallyl)adenosine (i(6)A). In Clostridium kluyveri (strain NBRC 12016), this protein is tRNA dimethylallyltransferase.